The chain runs to 107 residues: Transcriptional regulator Rv3488 (107 aa).

4 residues coordinate Cd(2+): His-16, Glu-30, His-34, and His-101.

In terms of assembly, homodimer.

In terms of biological role, may have transcription regulation and metal-detoxifying functions through which it may enhance intracellular survival of mycobacteria. Binds to its own promoter region and to the Rv1999c promoter region. It displays strong affinity for cadmium ions, but can also bind zinc, manganese and nickel. Expression increases the intracellular survival of recombinant M.smegmatis in murine macrophage cell line and increases its tolerance to cadmium ions. This is Transcriptional regulator Rv3488 from Mycobacterium tuberculosis (strain ATCC 25618 / H37Rv).